A 953-amino-acid chain; its full sequence is Ribonuclease E (953 aa).

2 disordered regions span residues 1-23 (MIDG…PDRL) and 118-314 (VAPQ…RRRP). The segment covering 14–23 (SQHEELPDRL) has biased composition (basic and acidic residues). Residues 127–150 (LADDEDVDDGPDYVADDSDADDEG) are compositionally biased toward acidic residues. A compositionally biased stretch (basic residues) spans 157–169 (NRRRRRGRRGRGR). The span at 183-193 (DQQSEPRAQQF) shows a compositional bias: polar residues. Positions 199 to 223 (AETDDGDDRDSEDTEAGDNGEDENG) are enriched in acidic residues. The span at 230–240 (RRRRRRRRRKS) shows a compositional bias: basic residues. 2 stretches are compositionally biased toward basic and acidic residues: residues 263-272 (VHERVPRAGD) and 294-311 (TRLE…DAGR). The S1 motif domain maps to 376 to 453 (GNIYLGIVQN…GHKGARLTTQ (78 aa)). Positions 647 and 691 each coordinate Mg(2+). Residues C749 and C752 each contribute to the Zn(2+) site. Disordered stretches follow at residues 766–808 (SAAA…APGE) and 822–953 (LAGR…IRLD). Over residues 848–915 (DLDDTAQADF…DADVDEEDAA (68 aa)) the composition is skewed to acidic residues.

This sequence belongs to the RNase E/G family. Assembles into a homotetramer formed by a dimer of dimers. Interacts with DNA-binding protein HU (hupB). Requires Mg(2+) as cofactor. Zn(2+) serves as cofactor.

The protein resides in the cytoplasm. The catalysed reaction is Endonucleolytic cleavage of single-stranded RNA in A- and U-rich regions.. Functionally, endoribonuclease that plays a central role in RNA processing and decay. Plays a major role in pre-16S rRNA maturation, probably generating the mature 5'-end, and a minor role in pre-5S and pre-23S rRNA maturation. Probably also processes tRNA. RNase E and HupB jointly contribute to cellular adaptation to changing growth conditions and survival during antibiotic treatment and in the host. In Mycobacterium tuberculosis (strain ATCC 25618 / H37Rv), this protein is Ribonuclease E.